Reading from the N-terminus, the 938-residue chain is E3 ubiquitin-protein ligase CBL-B (938 aa).

Residues Pro35 to Gln167 are 4H. The Cbl-PTB domain occupies Pro35 to Gly343. The interval Gly168–Phe240 is EF-hand-like. Ca(2+) is bound by residues Asp221, Thr223, Asn225, Tyr227, and Glu232. The SH2-like stretch occupies residues Gln241–Gly343. Ser282 is subject to Phosphoserine; by PKC/PRKCQ. Arg286 serves as a coordination point for 4-O-phospho-L-tyrosine. The interval Leu344–Leu372 is linker. Position 363 is a phosphotyrosine (Tyr363). The RING-type zinc finger occupies Cys373–Arg412. A disordered region spans residues Ala465–Pro588. Polar residues predominate over residues Arg473–Leu486. Residues Ser476, Ser480, Ser484, Ser521, Ser525, and Ser529 each carry the phosphoserine modification. An interaction with VAV1 region spans residues Pro543–Asp567. A compositionally biased stretch (pro residues) spans Leu544–Pro566. Phosphoserine is present on Ser633. Phosphotyrosine is present on residues Tyr664 and Tyr708. Disordered regions lie at residues Glu702–Cys725 and Asp771–Leu885. Positions His714–His724 are enriched in polar residues. Residues Pro775 to Ala784 show a composition bias toward pro residues. The span at Pro794–Gly804 shows a compositional bias: low complexity. Positions Asn839–Ser855 are enriched in polar residues. Tyr845 carries the phosphotyrosine modification. The interaction with SH3KBP1 stretch occupies residues Gln847–Ala883. Residues Pro862 to Pro878 show a composition bias toward basic residues. The 40-residue stretch at Asn887–Phe926 folds into the UBA domain.

Interacts with SH3 domain-containing proteins LCK, CRK and SORBS1. Interacts with LCP2 and ZAP70. Interacts with CBL. Interacts with SH3 domain-containing proteins VAV1, FYN, FGR, PLCG1, GRB2, CRKL, PIK3R1 and SH3KBP1/CIN85. Identified in heterotrimeric complexes with SH3KBP1/CIN85, CD2AP and ARHGEF7, where one CBLB peptide binds two copies of the other protein. Interacts with poly-ubiquitinated proteins. Dimerization is required for the binding of poly-ubiquitin, but not for the binding of mono-ubiquitin. Interacts with EGFR (phosphorylated). Interacts with IFT20. In terms of processing, phosphorylated on tyrosine and serine residues upon TCR or BCR activation, and upon various types of cell stimulation. Auto-ubiquitinated upon EGF-mediated cell activation or upon T-cell costimulation by CD28; which promotes proteasomal degradation.

Its subcellular location is the cytoplasm. The catalysed reaction is S-ubiquitinyl-[E2 ubiquitin-conjugating enzyme]-L-cysteine + [acceptor protein]-L-lysine = [E2 ubiquitin-conjugating enzyme]-L-cysteine + N(6)-ubiquitinyl-[acceptor protein]-L-lysine.. It functions in the pathway protein modification; protein ubiquitination. E3 ubiquitin-protein ligase which accepts ubiquitin from specific E2 ubiquitin-conjugating enzymes, and transfers it to substrates, generally promoting their degradation by the proteasome. Negatively regulates TCR (T-cell receptor), BCR (B-cell receptor) and FCER1 (high affinity immunoglobulin epsilon receptor) signal transduction pathways. In naive T-cells, inhibits VAV1 activation upon TCR engagement and imposes a requirement for CD28 costimulation for proliferation and IL-2 production. Also acts by promoting PIK3R1/p85 ubiquitination, which impairs its recruitment to the TCR and subsequent activation. In activated T-cells, inhibits PLCG1 activation and calcium mobilization upon restimulation and promotes anergy. In B-cells, acts by ubiquitinating SYK and promoting its proteasomal degradation. Slightly promotes SRC ubiquitination. May be involved in EGFR ubiquitination and internalization. May be functionally coupled with the E2 ubiquitin-protein ligase UB2D3. In association with CBL, required for proper feedback inhibition of ciliary platelet-derived growth factor receptor-alpha (PDGFRA) signaling pathway via ubiquitination and internalization of PDGFRA. This is E3 ubiquitin-protein ligase CBL-B (Cblb) from Rattus norvegicus (Rat).